Here is a 269-residue protein sequence, read N- to C-terminus: Energy-coupling factor transporter ATP-binding protein EcfA1 (269 aa).

In terms of domain architecture, ABC transporter spans I8–D242. Residue G42–S49 participates in ATP binding.

The protein belongs to the ABC transporter superfamily. Energy-coupling factor EcfA family. Forms a stable energy-coupling factor (ECF) transporter complex composed of 2 membrane-embedded substrate-binding proteins (S component), 2 ATP-binding proteins (A component) and 2 transmembrane proteins (T component).

The protein localises to the cell membrane. Functionally, ATP-binding (A) component of a common energy-coupling factor (ECF) ABC-transporter complex. Unlike classic ABC transporters this ECF transporter provides the energy necessary to transport a number of different substrates. The polypeptide is Energy-coupling factor transporter ATP-binding protein EcfA1 (Staphylococcus aureus (strain MSSA476)).